We begin with the raw amino-acid sequence, 335 residues long: MGASSSSALARLGLPAQARPRWLGVAVLGLAAVALGAVAWRRAWPRRRRRLQQVGTVAKLWIYPVKSCKGVPVSEAECTAMGLRSGNLRDRFLLVIKEDGHIVTARQEPRLVLVSITYENNCLIFKAPDMDQLVLPSKQPSSNKLHNCRIFGLDIKGRDCGNEAAQWFTNFLKTEVYRLVQFETNMKGRTSRKLLPTLDQNYQVAYPDCSPLLIMTDASLVDLNTRIEKKMKMENFRPNIVVTGCDAFEEDTWDELLIGSVEVKKIMACPRCILTTVDPDTGVIDRKEPLDTLKSYRLCDPSERELYKLSPLFGIYYSVEKIGSLRVGDPVYRMV.

A mitochondrion-targeting transit peptide spans Met1–Leu35. Residues Lys59, Lys138, and Lys144 each participate in a glycyl lysine isopeptide (Lys-Gly) (interchain with G-Cter in ubiquitin) cross-link. An N6-acetyllysine; alternate modification is found at Lys156. Lys156 participates in a covalent cross-link: Glycyl lysine isopeptide (Lys-Gly) (interchain with G-Cter in ubiquitin); alternate. Residues Lys173, Lys187, Lys287, and Lys294 each participate in a glycyl lysine isopeptide (Lys-Gly) (interchain with G-Cter in ubiquitin) cross-link. Positions Gly188 to Met334 constitute an MOSC domain.

As to quaternary structure, component of a complex composed of cytochrome b5, NADH-cytochrome b5 reductase (CYB5R3) and MTARC2. Mo-molybdopterin serves as cofactor. Post-translationally, ubiquitinated by PRKN during mitophagy, leading to its degradation and enhancement of mitophagy. Deubiquitinated by USP30.

The protein localises to the mitochondrion outer membrane. It localises to the peroxisome. It carries out the reaction N(omega)-hydroxy-L-arginine + 2 Fe(II)-[cytochrome b5] + 2 H(+) = L-arginine + 2 Fe(III)-[cytochrome b5] + H2O. Its function is as follows. Catalyzes the reduction of N-oxygenated molecules, acting as a counterpart of cytochrome P450 and flavin-containing monooxygenases in metabolic cycles. As a component of prodrug-converting system, reduces a multitude of N-hydroxylated prodrugs particularly amidoximes, leading to increased drug bioavailability. May be involved in mitochondrial N(omega)-hydroxy-L-arginine (NOHA) reduction, regulating endogenous nitric oxide levels and biosynthesis. Postulated to cleave the N-OH bond of N-hydroxylated substrates in concert with electron transfer from NADH to cytochrome b5 reductase then to cytochrome b5, the ultimate electron donor that primes the active site for substrate reduction. This chain is Mitochondrial amidoxime reducing component 2 (MTARC2), found in Macaca fascicularis (Crab-eating macaque).